A 259-amino-acid chain; its full sequence is ATP synthase subunit a (259 aa).

Positions 1–10 (MFNLLNTYIT) are cleaved as a propeptide — removed in mature form. The next 6 membrane-spanning stretches (helical) occupy residues 36 to 56 (LTTF…LYTL), 92 to 112 (WGLY…ANLI), 125 to 145 (LVFI…LGLY), 150 to 170 (VFFS…LLVI), 191 to 211 (ILAG…FMLI), and 216 to 236 (LVFG…EFAI).

This sequence belongs to the ATPase A chain family. In terms of assembly, F-type ATPases have 2 components, CF(1) - the catalytic core - and CF(0) - the membrane proton channel. In yeast, the dimeric form of ATP synthase consists of 17 polypeptides: alpha, beta, gamma, delta, epsilon, 4 (B), 5 (OSCP), 6 (A), 8, 9 (C), d, E (Tim11), f, g, h, i/j and k.

It localises to the mitochondrion inner membrane. In terms of biological role, mitochondrial membrane ATP synthase (F(1)F(0) ATP synthase or Complex V) produces ATP from ADP in the presence of a proton gradient across the membrane which is generated by electron transport complexes of the respiratory chain. F-type ATPases consist of two structural domains, F(1) - containing the extramembraneous catalytic core and F(0) - containing the membrane proton channel, linked together by a central stalk and a peripheral stalk. During catalysis, ATP synthesis in the catalytic domain of F(1) is coupled via a rotary mechanism of the central stalk subunits to proton translocation. Key component of the proton channel; it may play a direct role in the translocation of protons across the membrane. This Saccharomyces cerevisiae (strain ATCC 204508 / S288c) (Baker's yeast) protein is ATP synthase subunit a (ATP6).